The primary structure comprises 449 residues: Hyaluronidase (449 aa).

The first 23 residues, 1 to 23 (MYHLWIKCLAAWIFLKRFNGVHV), serve as a signal peptide directing secretion. Disulfide bonds link cysteine 47–cysteine 340 and cysteine 211–cysteine 227. Asparagine 67 and asparagine 103 each carry an N-linked (GlcNAc...) asparagine glycan. Catalysis depends on glutamate 135, which acts as the Proton donor. Residue asparagine 153 is glycosylated (N-linked (GlcNAc...) asparagine). Asparagine 357 is a glycosylation site (N-linked (GlcNAc...) asparagine). 3 disulfide bridges follow: cysteine 365-cysteine 376, cysteine 370-cysteine 427, and cysteine 429-cysteine 438. An N-linked (GlcNAc...) asparagine glycan is attached at asparagine 401. An EGF-like domain is found at 427–438 (CQCYQGWQGLYC).

The protein belongs to the glycosyl hydrolase 56 family. Monomer. Expressed by the venom gland.

The protein resides in the secreted. The enzyme catalyses Random hydrolysis of (1-&gt;4)-linkages between N-acetyl-beta-D-glucosamine and D-glucuronate residues in hyaluronate.. Functionally, snake venom endo-hyaluronidase that degrades hyaluronan to smaller oligosaccharide fragments. In venom, it is not toxic by itself, but increases the diffusion of other venom proteins by degrading the extracellular matrix. In addition, it displays antiedematogenic activity. This is Hyaluronidase from Echis ocellatus (Ocellated saw-scaled viper).